A 271-amino-acid chain; its full sequence is Thiazole synthase (271 aa).

Lys104 functions as the Schiff-base intermediate with DXP in the catalytic mechanism. Residues Gly165, 192–193 (AG), and 214–215 (NT) contribute to the 1-deoxy-D-xylulose 5-phosphate site.

The protein belongs to the ThiG family. In terms of assembly, homotetramer. Forms heterodimers with either ThiH or ThiS.

The protein localises to the cytoplasm. The catalysed reaction is [ThiS sulfur-carrier protein]-C-terminal-Gly-aminoethanethioate + 2-iminoacetate + 1-deoxy-D-xylulose 5-phosphate = [ThiS sulfur-carrier protein]-C-terminal Gly-Gly + 2-[(2R,5Z)-2-carboxy-4-methylthiazol-5(2H)-ylidene]ethyl phosphate + 2 H2O + H(+). The protein operates within cofactor biosynthesis; thiamine diphosphate biosynthesis. Its function is as follows. Catalyzes the rearrangement of 1-deoxy-D-xylulose 5-phosphate (DXP) to produce the thiazole phosphate moiety of thiamine. Sulfur is provided by the thiocarboxylate moiety of the carrier protein ThiS. In vitro, sulfur can be provided by H(2)S. The polypeptide is Thiazole synthase (Burkholderia mallei (strain ATCC 23344)).